The chain runs to 197 residues: Sialomucin core protein 24 (197 aa).

The first 23 residues, 1-23 (MSGSSRRLLWAATCLAVLCVSAA), serve as a signal peptide directing secretion. The Extracellular segment spans residues 24–162 (QPNITTLAPN…SQPERKSTFD (139 aa)). 9 N-linked (GlcNAc...) asparagine glycosylation sites follow: N26, N33, N69, N75, N87, N98, N103, N120, and N146. Residues 116-156 (PVPTNSTAKPTTRPSSPTPTPSVVTSAGTTNTTLTPTSQPE) form a disordered region. Positions 121–152 (STAKPTTRPSSPTPTPSVVTSAGTTNTTLTPT) are enriched in low complexity. The chain crosses the membrane as a helical span at residues 163 to 183 (AASFIGGIVLVLGVQAVIFFL). At 184–197 (YKFCKSKERNYHTL) the chain is on the cytoplasmic side. Residues 191–197 (ERNYHTL) are required for endosomal and lysosomal localization.

It belongs to the CD164 family. As to quaternary structure, interacts with CXCR4. Post-translationally, highly N- and O-glycosylated; contains sialic acid. In terms of tissue distribution, expressed at high levels in the submaxillary gland and kidney, at moderate levels in the brain, heart, lung, liver, intestine, testis, muscle and bone marrow, and at low levels in the pancreas, spleen and thymus. In the ear, expressed in the inner and outer hair cells of the organ of Corti, cells of Kolliker's organ, cells in the lateral cochlear wall behind the spiral prominence and cells of the stria vascularis.

The protein localises to the lysosome membrane. It localises to the endosome membrane. The protein resides in the cell membrane. Sialomucin that may play a key role in hematopoiesis. May be involved in cell adhesion. Promotes myogenesis by enhancing CXCR4-dependent cell motility. Positively regulates myoblast migration and promotes myoblast fusion into myotubes. The protein is Sialomucin core protein 24 (Cd164) of Mus musculus (Mouse).